Consider the following 110-residue polypeptide: UPF0122 protein SP70585_1353 (110 aa).

Belongs to the UPF0122 family.

Functionally, might take part in the signal recognition particle (SRP) pathway. This is inferred from the conservation of its genetic proximity to ftsY/ffh. May be a regulatory protein. This Streptococcus pneumoniae (strain 70585) protein is UPF0122 protein SP70585_1353.